Consider the following 329-residue polypeptide: Epoxide hydrolase (329 aa).

The AB hydrolase-1 domain occupies 35 to 308 (PAVLFCHGFP…DNVGHWVQHE (274 aa)). The active-site Nucleophile is the Asp-111. The Proton donor role is filled by Tyr-242. The Proton acceptor role is filled by His-303.

This sequence belongs to the AB hydrolase superfamily. Epoxide hydrolase family. Homodimer.

The enzyme catalyses an epoxide + H2O = an ethanediol. The catalysed reaction is (R)-styrene oxide + H2O = (R)-styrene glycol. It catalyses the reaction (S)-styrene oxide + H2O = (S)-styrene glycol. It carries out the reaction 3,4-epoxy-1-cyclohexene + H2O = cyclohex-3-ene-1,2-diol. Its function is as follows. Catalyzes the hydrolysis of various epoxides into diols. In vitro, shows the strongest activity toward aromatic and cyclic aliphatic epoxide compounds, since it shows strong activity toward (R)-styrene oxide, (S)-styrene oxide, and 3,4-epoxy-1-cyclohexene, but very weak activity toward (R)-epichlorohydrin, (S)-epichlorohydrin, and 1,2-epoxy-9-decene. The sequence is that of Epoxide hydrolase from Caballeronia sordidicola (Burkholderia sordidicola).